The chain runs to 198 residues: MKINSEVALVGNQIILVPYKEKHVPRYHEWMQSPELLEQTASERLMLQQEYDMQQSWLNDENKCTFIVLDKQKWNDNGNNEIESMAGDVNLFFNDPDDLHVAEIEIMIAEPSSRGRGLGKEALLIMMSYGISKLHVNRFTAKIGHDNEPSLSLFNKLGFTKISESEVFKEVTLKFDSNNFTNLTADVTELHYPIKTQA.

An N-acetyltransferase domain is found at 14 to 186; it reads IILVPYKEKH…SNNFTNLTAD (173 aa).

Belongs to the acetyltransferase family. GNAT subfamily.

This chain is N-acetyltransferase 9-like protein (nat9), found in Nematostella vectensis (Starlet sea anemone).